A 363-amino-acid chain; its full sequence is Uptake hydrogenase small subunit (363 aa).

The segment at residues 1-46 (MGAATETFYSVIRRQGITRRSFHKFCSLTATSLGLGPLAASRIANA) is a signal peptide (tat-type signal). [4Fe-4S] cluster-binding residues include cysteine 63, cysteine 66, cysteine 161, cysteine 195, histidine 233, cysteine 236, cysteine 261, and cysteine 267. [3Fe-4S] cluster contacts are provided by cysteine 276, cysteine 295, and cysteine 298.

Belongs to the [NiFe]/[NiFeSe] hydrogenase small subunit family. Heterodimer of a large and a small subunit. Requires [4Fe-4S] cluster as cofactor. The cofactor is [3Fe-4S] cluster. Post-translationally, predicted to be exported by the Tat system. The position of the signal peptide cleavage has not been experimentally proven.

The protein resides in the cell membrane. The enzyme catalyses H2 + A = AH2. Its function is as follows. This enzyme recycles the H(2) produced by nitrogenase to increase the production of ATP and to protect nitrogenase against inhibition or damage by O(2) under carbon- or phosphate-limited conditions. The polypeptide is Uptake hydrogenase small subunit (hupA) (Bradyrhizobium diazoefficiens (strain JCM 10833 / BCRC 13528 / IAM 13628 / NBRC 14792 / USDA 110)).